The chain runs to 102 residues: Pole-localizer protein TmaR (102 aa).

Residues 7–34 (IINQARRKNKLKRELQDNQKKIRDNQKR) adopt a coiled-coil conformation.

The protein belongs to the pole-localizer TmaR family.

The protein localises to the cytoplasm. Its function is as follows. Pole-localizer protein involved in the regulation of several cellular processes. In Aliivibrio fischeri (strain ATCC 700601 / ES114) (Vibrio fischeri), this protein is Pole-localizer protein TmaR.